Here is a 165-residue protein sequence, read N- to C-terminus: ATP synthase subunit b (165 aa).

Residues 7 to 27 (GTSLGNLLIVTGSFILLLLLV) form a helical membrane-spanning segment.

The protein belongs to the ATPase B chain family. F-type ATPases have 2 components, F(1) - the catalytic core - and F(0) - the membrane proton channel. F(1) has five subunits: alpha(3), beta(3), gamma(1), delta(1), epsilon(1). F(0) has three main subunits: a(1), b(2) and c(10-14). The alpha and beta chains form an alternating ring which encloses part of the gamma chain. F(1) is attached to F(0) by a central stalk formed by the gamma and epsilon chains, while a peripheral stalk is formed by the delta and b chains.

It localises to the cell membrane. Its function is as follows. F(1)F(0) ATP synthase produces ATP from ADP in the presence of a proton or sodium gradient. F-type ATPases consist of two structural domains, F(1) containing the extramembraneous catalytic core and F(0) containing the membrane proton channel, linked together by a central stalk and a peripheral stalk. During catalysis, ATP synthesis in the catalytic domain of F(1) is coupled via a rotary mechanism of the central stalk subunits to proton translocation. In terms of biological role, component of the F(0) channel, it forms part of the peripheral stalk, linking F(1) to F(0). This Streptococcus mutans serotype c (strain ATCC 700610 / UA159) protein is ATP synthase subunit b.